The chain runs to 236 residues: 15,16-dihydrobiliverdin:ferredoxin oxidoreductase (236 aa).

This sequence belongs to the HY2 family.

It carries out the reaction 15,16-dihydrobiliverdin + oxidized 2[4Fe-4S]-[ferredoxin] = biliverdin IXalpha + reduced 2[4Fe-4S]-[ferredoxin] + 2 H(+). Its function is as follows. Catalyzes the two-electron reduction of biliverdin IX-alpha at the C15 methine bridge. In Prochlorococcus marinus (strain MIT 9215), this protein is 15,16-dihydrobiliverdin:ferredoxin oxidoreductase.